A 506-amino-acid chain; its full sequence is D-alanine--D-alanyl carrier protein ligase (506 aa).

Threonine 152 to serine 153 serves as a coordination point for ATP. Aspartate 197 provides a ligand contact to D-alanine. ATP is bound at residue asparagine 292 to threonine 297. Residue valine 301 participates in D-alanine binding. Residues aspartate 383, tyrosine 395–arginine 398, and lysine 494 contribute to the ATP site. Lysine 494 provides a ligand contact to D-alanine.

Belongs to the ATP-dependent AMP-binding enzyme family. DltA subfamily.

The protein localises to the cytoplasm. It catalyses the reaction holo-[D-alanyl-carrier protein] + D-alanine + ATP = D-alanyl-[D-alanyl-carrier protein] + AMP + diphosphate. It participates in cell wall biogenesis; lipoteichoic acid biosynthesis. In terms of biological role, catalyzes the first step in the D-alanylation of lipoteichoic acid (LTA), the activation of D-alanine and its transfer onto the D-alanyl carrier protein (Dcp) DltC. In an ATP-dependent two-step reaction, forms a high energy D-alanyl-AMP intermediate, followed by transfer of the D-alanyl residue as a thiol ester to the phosphopantheinyl prosthetic group of the Dcp. D-alanylation of LTA plays an important role in modulating the properties of the cell wall in Gram-positive bacteria, influencing the net charge of the cell wall. This chain is D-alanine--D-alanyl carrier protein ligase, found in Lacticaseibacillus paracasei (strain ATCC 334 / BCRC 17002 / CCUG 31169 / CIP 107868 / KCTC 3260 / NRRL B-441) (Lactobacillus paracasei).